A 333-amino-acid polypeptide reads, in one-letter code: MVGLVFVGMDHGTTGVSFTILGDDAEHFKIGREDLSTGRASALDELKDRVPLNEIDLMAITYAMGDAISTIKPIERVKNRGIISIGGAGKVTGGGTAVYSEIESSGIPTLLIPGLHRNTPCLDERFRAAYSHHASPEKVSICYNAYLETGWENMIVSDISSNTVTMLIQDGRIVGAMDACVGAMGVIHGPLDLEMLRKIDDGEKTANECFSHAGAVKIAGIDTKVSRAREELLEMYRAGRDEARLALDTMMMTIAMEIWGLAGISSGIDGIVLTGSVGAMREPYDFHGKLKDMVKEIADVRCTDSHLRLHGKCQIARDIYNGKREILGIEVEV.

The protein belongs to the UPF0285 family.

This is UPF0285 protein MTH_1441 from Methanothermobacter thermautotrophicus (strain ATCC 29096 / DSM 1053 / JCM 10044 / NBRC 100330 / Delta H) (Methanobacterium thermoautotrophicum).